A 280-amino-acid polypeptide reads, in one-letter code: uncharacterized protein (280 aa).

Tyr54 (proton donor) is an active-site residue. Residue His116 participates in substrate binding. Residue 194 to 246 coordinates NADP(+); that stretch reads SPLMQGQLLDHPVLADIAQTYNKSVAQIILRWDLQHGIITIPKSTKEHRIKEN.

The protein belongs to the aldo/keto reductase family.

This is an uncharacterized protein from Bacillus subtilis (strain 168).